The primary structure comprises 258 residues: Uroplakin-1a (258 aa).

Residues 1–14 are Cytoplasmic-facing; it reads MASAAAATTEKGSP. The helical transmembrane segment at 15 to 35 threads the bilayer; that stretch reads VVVGLLVMGNIIILLSGLALF. The Extracellular segment spans residues 36 to 59; the sequence is AETVWVTADQYRIYPLMGVSGKDD. The chain crosses the membrane as a helical span at residues 60 to 86; that stretch reads VFAGAWIAIFCGFSFFVVASFGVGAAL. Residues 87–91 lie on the Cytoplasmic side of the membrane; sequence CRRRS. Residues 92–112 traverse the membrane as a helical segment; sequence MILTYLILMLIIYIFECASCI. Topologically, residues 113-230 are extracellular; sequence TSYTHRDYMV…HIGHAIDSYT (118 aa). The N-linked (GlcNAc...) asparagine glycan is linked to N170. A helical membrane pass occupies residues 231-252; sequence WGISWFGFAILMWTLPVMLIAM. Over 253–258 the chain is Cytoplasmic; sequence YFYTTL.

This sequence belongs to the tetraspanin (TM4SF) family. Homodimer; disulfide-linked. Interacts with uroplakin-2 (UPK2). In terms of processing, the N-terminus is blocked. N-glycosylated with high-mannose oligosaccharides. In terms of tissue distribution, bladder epithelium.

The protein resides in the membrane. Its function is as follows. Component of the asymmetric unit membrane (AUM); a highly specialized biomembrane elaborated by terminally differentiated urothelial cells. May play an important role in normal bladder epithelial physiology, possibly in regulating membrane permeability of superficial umbrella cells or in stabilizing the apical membrane through AUM/cytoskeletal interactions. In Bos taurus (Bovine), this protein is Uroplakin-1a (UPK1A).